The primary structure comprises 107 residues: U1-lycotoxin-Ls1b (107 aa).

Positions 1–20 (MMKVLVVVALLATLISYSSS) are cleaved as a signal peptide. A propeptide spanning residues 21 to 41 (EGIDDLEADELLSLMANEQTR) is cleaved from the precursor. 4 disulfides stabilise this stretch: C44/C59, C51/C68, C58/C86, and C70/C84.

It belongs to the neurotoxin 19 (CSTX) family. 04 (U1-Lctx) subfamily. In terms of tissue distribution, expressed by the venom gland.

It is found in the secreted. The sequence is that of U1-lycotoxin-Ls1b from Lycosa singoriensis (Wolf spider).